The sequence spans 276 residues: Thiazole synthase (276 aa).

Lys-112 acts as the Schiff-base intermediate with DXP in catalysis. Residues Gly-173, 199-200 (AG), and 221-222 (NT) each bind 1-deoxy-D-xylulose 5-phosphate.

This sequence belongs to the ThiG family. In terms of assembly, homotetramer. Forms heterodimers with either ThiH or ThiS.

Its subcellular location is the cytoplasm. It catalyses the reaction [ThiS sulfur-carrier protein]-C-terminal-Gly-aminoethanethioate + 2-iminoacetate + 1-deoxy-D-xylulose 5-phosphate = [ThiS sulfur-carrier protein]-C-terminal Gly-Gly + 2-[(2R,5Z)-2-carboxy-4-methylthiazol-5(2H)-ylidene]ethyl phosphate + 2 H2O + H(+). The protein operates within cofactor biosynthesis; thiamine diphosphate biosynthesis. Functionally, catalyzes the rearrangement of 1-deoxy-D-xylulose 5-phosphate (DXP) to produce the thiazole phosphate moiety of thiamine. Sulfur is provided by the thiocarboxylate moiety of the carrier protein ThiS. In vitro, sulfur can be provided by H(2)S. This Synechococcus sp. (strain ATCC 27144 / PCC 6301 / SAUG 1402/1) (Anacystis nidulans) protein is Thiazole synthase.